We begin with the raw amino-acid sequence, 313 residues long: Homoserine O-succinyltransferase (313 aa).

The Acyl-thioester intermediate role is filled by cysteine 142. Substrate is bound by residues lysine 163 and serine 192. Histidine 235 acts as the Proton acceptor in catalysis. Glutamate 237 is an active-site residue. Residue arginine 249 coordinates substrate.

Belongs to the MetA family.

It localises to the cytoplasm. The catalysed reaction is L-homoserine + succinyl-CoA = O-succinyl-L-homoserine + CoA. The protein operates within amino-acid biosynthesis; L-methionine biosynthesis via de novo pathway; O-succinyl-L-homoserine from L-homoserine: step 1/1. Transfers a succinyl group from succinyl-CoA to L-homoserine, forming succinyl-L-homoserine. The chain is Homoserine O-succinyltransferase from Vibrio campbellii (strain ATCC BAA-1116).